The following is a 303-amino-acid chain: ADP-ribosyl cyclase/cyclic ADP-ribose hydrolase 1 (303 aa).

At 1–21 (MANYEFSQVSEDRPGCRLTRK) the chain is on the cytoplasmic side. A helical; Signal-anchor for type II membrane protein transmembrane segment spans residues 22–44 (AQIGLGVGLLLLVALVVVVVIVL). Over 45–303 (WPRSPLVWKG…PEHPSCRLNV (259 aa)) the chain is Extracellular. 3 disulfide bridges follow: Cys69-Cys85, Cys102-Cys183, and Cys163-Cys176. Asn103 carries N-linked (GlcNAc...) asparagine glycosylation. Cys122 is a catalytic residue. N-linked (GlcNAc...) asparagine glycosylation occurs at Asn123. Cys204 is a catalytic residue. N-linked (GlcNAc...) asparagine glycosylation is found at Asn212 and Asn222. 2 disulfide bridges follow: Cys257–Cys278 and Cys290–Cys299.

It belongs to the ADP-ribosyl cyclase family. In terms of assembly, homodimer. Spleen, liver, heart, thymus, thyroid gland, ileum, colon, cerebellum, salivary gland, adrenal gland, jejunum, islets of Langerhans and osteoclasts.

It localises to the cell membrane. It carries out the reaction NAD(+) = cyclic ADP-beta-D-ribose + nicotinamide + H(+). The enzyme catalyses nicotinate + NADP(+) = nicotinate-adenine dinucleotide phosphate + nicotinamide. The catalysed reaction is NAD(+) + H2O = ADP-D-ribose + nicotinamide + H(+). With respect to regulation, both NAADP and cADPR synthesis are inhibited by nicotinic acid. Synthesizes the second messengers cyclic ADP-ribose and nicotinate-adenine dinucleotide phosphate, the former a second messenger for glucose-induced insulin secretion, the latter a Ca(2+) mobilizer. Also has cADPR hydrolase activity. Functionally, regulates osteoclastic bone resorption, probably via production of cyclic ADP-ribose and triggering of a cytosolic calcium ion signal through ryanodine receptor activation. The protein is ADP-ribosyl cyclase/cyclic ADP-ribose hydrolase 1 (Cd38) of Rattus norvegicus (Rat).